We begin with the raw amino-acid sequence, 364 residues long: Ribosomal RNA large subunit methyltransferase F (364 aa).

The interval 1–30 (MTNKRKSAKPLEPAKRAPKPRTKKSRDLSA) is disordered.

The protein belongs to the methyltransferase superfamily. METTL16/RlmF family.

The protein resides in the cytoplasm. The enzyme catalyses adenosine(1618) in 23S rRNA + S-adenosyl-L-methionine = N(6)-methyladenosine(1618) in 23S rRNA + S-adenosyl-L-homocysteine + H(+). Specifically methylates the adenine in position 1618 of 23S rRNA. This Vibrio vulnificus (strain CMCP6) protein is Ribosomal RNA large subunit methyltransferase F.